Here is a 1836-residue protein sequence, read N- to C-terminus: U3 small nucleolar RNA-associated protein 10 (1836 aa).

Residues 245–283 (EVVGFLLLPSKYETLRNIDVDTRLTAYSIIAVLASIIPI) form an HEAT 1 repeat. The segment at 453 to 473 (SNSSVRDSDDVEFDAGEEDNN) is disordered. Positions 461-473 (DDVEFDAGEEDNN) are enriched in acidic residues. 2 HEAT repeats span residues 585–623 (PLDL…TTTS) and 813–850 (VENR…DQDL). The tract at residues 863–883 (QIPEQGPAKRRRRSSSSTKQA) is disordered. A run of 2 helical transmembrane segments spans residues 998–1018 (LLLV…HSVM) and 1085–1105 (LFTY…LLFL). HEAT repeat units lie at residues 1333-1372 (ESVL…KFGA), 1749-1787 (ETLV…KMGE), and 1790-1828 (LTYL…NVLG).

It belongs to the HEATR1/UTP10 family. In terms of assembly, component of the ribosomal small subunit (SSU) processome.

It localises to the nucleus. It is found in the nucleolus. Its subcellular location is the membrane. In terms of biological role, involved in nucleolar processing of pre-18S ribosomal RNA. Involved in ribosome biosynthesis. The chain is U3 small nucleolar RNA-associated protein 10 from Scheffersomyces stipitis (strain ATCC 58785 / CBS 6054 / NBRC 10063 / NRRL Y-11545) (Yeast).